Reading from the N-terminus, the 1896-residue chain is Trinucleotide repeat-containing gene 6A protein (1896 aa).

2 stretches are compositionally biased toward basic and acidic residues: residues 1 to 21 (MREL…RDLV) and 39 to 57 (KKKE…KVPE). Disordered stretches follow at residues 1-137 (MREL…LLKR), 159-209 (SESS…DCST), 222-250 (EAWP…SESE), and 257-276 (ASGN…GLGS). An interaction with argonaute family proteins region spans residues 1–917 (MRELEAKATK…GDPPKCNQSL (917 aa)). 2 stretches are compositionally biased toward low complexity: residues 69 to 93 (ANSD…ASNQ) and 101 to 113 (QQPQ…QQPQ). Residues 125 to 137 (RFRHQEHKQLLKR) are compositionally biased toward basic residues. Residues 239–488 (IDADSASNSE…QAPSVMNGTS (250 aa)) are sufficient for interaction with AGO1, AGO3 and AGO4. Sufficient for interaction with AGO2 stretches follow at residues 255-331 (VMAS…NAWG), 303-384 (GALI…STIG), 325-424 (NRMN…KVSF), 394-480 (SKVS…QIQA), and 487-736 (TSLS…NGTE). Composition is skewed to polar residues over residues 396-410 (VSGS…SLQE) and 417-429 (SGTQ…GQPQ). 5 disordered regions span residues 396-461 (VSGS…NELP), 548-683 (FQVN…RRKI), 703-998 (LSNS…DPSK), 1011-1126 (IPEA…PTGW), and 1143-1182 (QELN…NKQE). The span at 430–443 (NITTETTGPNNTTN) shows a compositional bias: low complexity. Polar residues predominate over residues 444–461 (FMTSSLPNSGSVQNNELP). A sufficient for interaction with AGO1 and AGO4 region spans residues 551-1279 (NTNKGGGVWE…MFGVGNTAAQ (729 aa)). Over residues 573-584 (SGNGANSGGSRR) the composition is skewed to gly residues. Composition is skewed to polar residues over residues 591–617 (QNTG…SANG) and 635–647 (GSAT…QNSV). Over residues 665-683 (GRLEEKVTGESQSRDRRKI) the composition is skewed to basic and acidic residues. Residues 703 to 722 (LSNSGWGQTPIKQNTAWDTE) show a composition bias toward polar residues. Over residues 723 to 733 (TSPRGERKTDN) the composition is skewed to basic and acidic residues. Ser-724 bears the Phosphoserine mark. Residues 738 to 766 (WGSSATQTFNSGACTDKTSPNSNDTSSVS) show a composition bias toward polar residues. A compositionally biased stretch (low complexity) spans 858-871 (SSSGGSDSDRSISG). Phosphoserine is present on Ser-863. Composition is skewed to polar residues over residues 876-906 (GKTS…SSQG) and 924-937 (KPVS…QQDI). Ser-976 is subject to Phosphoserine. 3 stretches are compositionally biased toward polar residues: residues 1033-1042 (AVSSKETSSG), 1054-1064 (TPATTVDNGTS), and 1082-1105 (AASN…SGPK). The tract at residues 1059 to 1129 (VDNGTSAWGK…GSRPTGWEEE (71 aa)) is sufficient for interaction with AGO2. Residues 1143–1163 (QELNSSLNWPPYTKKMSSKGL) are compositionally biased toward low complexity. 2 positions are modified to phosphoserine: Ser-1197 and Ser-1255. Disordered regions lie at residues 1234 to 1256 (GDYN…ESSM), 1273 to 1306 (VGNT…PPPL), and 1360 to 1395 (QRAQ…QSRQ). 2 stretches are compositionally biased toward low complexity: residues 1284–1296 (QQPP…SSQP) and 1360–1376 (QRAQ…RQQQ). A Phosphothreonine modification is found at Thr-1406. 2 disordered regions span residues 1512 to 1570 (MNSS…VTPG) and 1659 to 1685 (PKNI…WDNS). At Ser-1520 the chain carries Phosphoserine. Residues 1605-1896 (TSAWSSIRAS…DHLGGGGESM (292 aa)) form a sufficient for interaction with AGO2 region. One can recognise an RRM domain in the interval 1716-1788 (NWLVLKNLTP…TTILAEFASE (73 aa)). A phosphoserine mark is found at Ser-1804 and Ser-1825.

This sequence belongs to the GW182 family. In terms of assembly, interacts with AGO2. Interacts with AGO1, AGO3 and AGO4. Interacts with CNOT1; the interaction is direct and mediates the association with the CCR4-NOT complex. Interacts with ZC3H12A. Interacts with SND1. Interacts with GARRE1.

The protein resides in the cytoplasm. It localises to the P-body. Functionally, plays a role in RNA-mediated gene silencing by both micro-RNAs (miRNAs) and short interfering RNAs (siRNAs). Required for miRNA-dependent repression of translation and for siRNA-dependent endonucleolytic cleavage of complementary mRNAs by argonaute family proteins. As a scaffolding protein, associates with argonaute proteins bound to partially complementary mRNAs, and can simultaneously recruit CCR4-NOT and PAN deadenylase complexes. The protein is Trinucleotide repeat-containing gene 6A protein (Tnrc6a) of Mus musculus (Mouse).